The primary structure comprises 95 residues: Neutrophil antibiotic peptide NP-5 (95 aa).

Residues 1–19 form the signal peptide; it reads MRTLALLAAILLVTLQAQA. Positions 20–62 are excised as a propeptide; it reads ELHSGMADDGVDQQQPRAQDLDVAVYIKQDETSPLEVLGAKAG. Cystine bridges form between Cys65/Cys93, Cys67/Cys82, and Cys72/Cys92.

Belongs to the alpha-defensin family.

The protein localises to the secreted. Its function is as follows. Microbicidal activity. The protein is Neutrophil antibiotic peptide NP-5 of Oryctolagus cuniculus (Rabbit).